Here is a 208-residue protein sequence, read N- to C-terminus: MGISRDHWHKRRATGGKRKPIRKKRKFELGRPAANTKLGPQRIHTVRTRGGNKKYRALRLDTGNFSWGSECTTRKTRIIDVVYNASNNELVRTKTLVKNAIVTIDATPFRQWYEGHYVLPLGRKRGAKLTEAEEEVLNKKRSKKAEAKYKARQRFAKVEPALEEQFATGRVLACISSRPGQCGREDGYILEGKELEFYMRRIKSKKAK.

The interval methionine 1–alanine 33 is disordered. A compositionally biased stretch (basic residues) spans histidine 7–lysine 26.

It belongs to the eukaryotic ribosomal protein eS8 family.

In Apis mellifera (Honeybee), this protein is Small ribosomal subunit protein eS8 (RpS8).